Here is a 137-residue protein sequence, read N- to C-terminus: Type 3 secretion system pilotin (137 aa).

The first 14 residues, 1–14 (MLLPLALLLGGCVS), serve as a signal peptide directing secretion.

It belongs to the ExsB/YscW family.

The protein resides in the cell outer membrane. Its function is as follows. Involved in the synthesis of the type III secretion system (T3SS), also called injectisome, which is used to inject bacterial effector proteins into eukaryotic host cells. Pilot protein that is required for the proper localization of the secretin PscC in the outer membrane. Necessary for full in vivo virulence. The polypeptide is Type 3 secretion system pilotin (Pseudomonas aeruginosa (strain ATCC 15692 / DSM 22644 / CIP 104116 / JCM 14847 / LMG 12228 / 1C / PRS 101 / PAO1)).